We begin with the raw amino-acid sequence, 593 residues long: Probable metalloprotease ARX1 (593 aa).

This sequence belongs to the peptidase M24 family. As to quaternary structure, component of the nucleoplasmic and cytoplasmic pre-60S ribosomal particles. Interacts directly with REI1.

The protein localises to the cytoplasm. Its subcellular location is the nucleus. In terms of biological role, probable metalloprotease involved in proper assembly of pre-ribosomal particles during the biogenesis of the 60S ribosomal subunit. Accompanies the pre-60S particles to the cytoplasm. This chain is Probable metalloprotease ARX1 (ARX1), found in Saccharomyces cerevisiae (strain ATCC 204508 / S288c) (Baker's yeast).